Here is a 272-residue protein sequence, read N- to C-terminus: Aurora kinase (272 aa).

A Protein kinase domain is found at 10–263; it reads FEIGRLLGRG…LTEALNHPFI (254 aa). Residues 16-24 and K39 contribute to the ATP site; that span reads LGRGKFGQV. D134 acts as the Proton acceptor in catalysis.

The protein belongs to the protein kinase superfamily. Ser/Thr protein kinase family. Aurora subfamily.

It localises to the nucleus. Its subcellular location is the cytoplasm. It is found in the cytoskeleton. The protein resides in the spindle. The protein localises to the chromosome. It localises to the centromere. Its subcellular location is the kinetochore. It catalyses the reaction L-seryl-[protein] + ATP = O-phospho-L-seryl-[protein] + ADP + H(+). The catalysed reaction is L-threonyl-[protein] + ATP = O-phospho-L-threonyl-[protein] + ADP + H(+). In terms of biological role, component of the chromosomal passenger complex (CPC), a complex that acts as a key regulator of chromosome segregation and cytokinesis. Has a role in error-correction of aberrent kinetochore-microtubule attachments to ensure that sister kinetochores become bioriented and connect to opposite poles by promoting spindle assembly checkpoint signaling. In Encephalitozoon cuniculi (strain GB-M1) (Microsporidian parasite), this protein is Aurora kinase (IPL1).